Consider the following 205-residue polypeptide: Putative 3-methyladenine DNA glycosylase (205 aa).

The protein belongs to the DNA glycosylase MPG family.

In Clostridium perfringens (strain SM101 / Type A), this protein is Putative 3-methyladenine DNA glycosylase.